The sequence spans 378 residues: WUSCHEL-related homeobox 9 (378 aa).

Disordered regions lie at residues 1–60 (MASS…NPKP) and 123–173 (KHSL…GSQM). A compositionally biased stretch (low complexity) spans 32 to 42 (SASHRSSPFSS). Over residues 45–54 (EVERSPEPKP) the composition is skewed to basic and acidic residues. The segment at residues 51–115 (EPKPRWNPKP…NRKSRSKHKL (65 aa)) is a DNA-binding region (homeobox; WUS-type). Low complexity-rich tracts occupy residues 137-152 (PSAS…SSKS) and 161-171 (KNNTNLSLGGS).

Belongs to the WUS homeobox family. Expressed in the basal cell and later at the boundary between suspensor and proembryo. Expressed at low levels in proliferating tissues post embryonically. Detected in vegetative shoot apical meristem, leaf primordia, floral meristems, emerging floral organs, epidermal layer of the placenta and in the upper portion of the root meristematic zone.

The protein localises to the nucleus. It is found in the cytoplasm. Functionally, homeodomain transcription factor required for meristem growth and early development. Promotes cell proliferation and prevents premature differentiation in meristematic tissues during postembryonic development. Essential for maintaining tissue growth during embryogenesis. May act by repressing TSS to promote meristematic proliferation. Involved in the transcriptional activation of a subset of cytokinin response factors. May act as a negative regulator of cytokinin signaling in the dark. The protein is WUSCHEL-related homeobox 9 of Arabidopsis thaliana (Mouse-ear cress).